A 594-amino-acid polypeptide reads, in one-letter code: MADPGAVKETVLLLDEPTGEKVSKTELKKRLKSRAKEAEKQKKAATAPTKIQKETSSEQDEANLSAHQYFEIRSNRINKLRETKNSYPYPHKFEVTNDLRDFLTVYKNLAKGEERTDVPIRIAGRIYTKRVSGNKLVFYDIRAEGVKVQVMCQAQNSTTGFEEQHEVLRRGDIVGIVGFPGRTSPKTRDNGELSIFATQVVLLSPCLHALPSEHYGFQDKEQRFRQRYLDLIINDRPRQIFRTRAKIVSYLRSYLDSRDFTEVETPMMNAIAGGATASPFVTHHNDLKRDLFMRVAPELYLKMLVVGGLERVYEIGKQFRNEGIDLTHSPEFTTCEFYQAYADYNDLMAMTEDLISSMVKHITGGYETTFESQTGQVYTINWQSPWKRIDMIPALEEACGDKFPPGDQLHTPEAGTFLKEMLKKMKVECTPPLTNARMLDKLVGEFVEDKCINPTFVTGHPQMMSPLAKAHRDTPGICERFEVFVTTKELLNAYTELNDPFDQRMRFEEQANQKAQGDDEAQMVDENFCQALEYGLPPTGGWGMGIDRLTMFLTNNYSIKEVLAFPMMKDDKADGEKKEAIVKTGTAEDGSVQL.

The interval 1–62 (MADPGAVKET…KETSSEQDEA (62 aa)) is disordered. Residues 18 to 42 (TGEKVSKTELKKRLKSRAKEAEKQK) are compositionally biased toward basic and acidic residues.

The protein belongs to the class-II aminoacyl-tRNA synthetase family. In terms of assembly, homodimer.

It catalyses the reaction tRNA(Lys) + L-lysine + ATP = L-lysyl-tRNA(Lys) + AMP + diphosphate. Functionally, involved in self-resistance to cladosporin since this product is an inhibitor of lysyl-tRNA synthetase. Cla4 may not be inhibited by cladosporin, thereby imparting cladosporin resistance. When cladosporin biosynthesis is switched on, transcription of cla4 will then be necessary for continued protein synthesis in C.cladosporioides. The chain is Lysine--tRNA ligase cla4 from Cladosporium cladosporioides.